Here is a 233-residue protein sequence, read N- to C-terminus: Sugar fermentation stimulation protein homolog (233 aa).

This sequence belongs to the SfsA family.

This chain is Sugar fermentation stimulation protein homolog, found in Pyrobaculum neutrophilum (strain DSM 2338 / JCM 9278 / NBRC 100436 / V24Sta) (Thermoproteus neutrophilus).